Reading from the N-terminus, the 203-residue chain is Endo-type membrane-bound lytic murein transglycosylase A (203 aa).

A signal peptide spans 1–15 (MKLRWFAFLIVLLAG). Cys-16 carries the N-palmitoyl cysteine lipid modification. A lipid anchor (S-diacylglycerol cysteine) is attached at Cys-16.

This sequence belongs to the transglycosylase Slt family.

It is found in the cell outer membrane. The catalysed reaction is Endolytic cleavage of the (1-&gt;4)-beta-glycosidic linkage between N-acetylmuramic acid (MurNAc) and N-acetylglucosamine (GlcNAc) residues in peptidoglycan with concomitant formation of a 1,6-anhydrobond in the MurNAc residue.. Functionally, murein-degrading enzyme. May play a role in recycling of muropeptides during cell elongation and/or cell division. Preferentially cleaves at a distance of more than two disaccharide units from the ends of the glycan chain. This Shigella dysenteriae serotype 1 (strain Sd197) protein is Endo-type membrane-bound lytic murein transglycosylase A.